Here is a 199-residue protein sequence, read N- to C-terminus: MARCKS-related protein (199 aa).

Residues 1–199 form a disordered region; the sequence is MGSQSSKAPR…PTPAGAEQNE (199 aa). The N-myristoyl glycine moiety is linked to residue G2. T14 carries the post-translational modification Phosphothreonine. Low complexity predominate over residues 16–26; it reads EEAAGASPAKA. 3 positions are modified to phosphoserine: S22, S36, and S48. Low complexity predominate over residues 53–64; it reads GTDEAAGATGDA. S71 carries the post-translational modification Phosphoserine. The span at 76–85 shows a compositional bias: basic and acidic residues; the sequence is AKGDAPPKET. Residue T85 is modified to Phosphothreonine. Residues 86–98 show a composition bias toward basic residues; the sequence is PKKKKKFSFKKPF. An effector domain involved in lipid-binding and calmodulin-binding region spans residues 87 to 110; sequence KKKKKFSFKKPFKLSGLSFKRNRK. 3 positions are modified to phosphoserine; by PKC: S93, S101, and S104. S119 carries the post-translational modification Phosphoserine. Position 120 is a phosphoserine; by MAPK8 (S120). S135 bears the Phosphoserine mark. T148 is subject to Phosphothreonine; by MAPK8. S151 is subject to Phosphoserine. Positions 156 to 167 are enriched in low complexity; that stretch reads AKGAEAGAACKG. T170 bears the Phosphothreonine mark. Positions 181–199 are enriched in low complexity; it reads STPSGPESGPTPAGAEQNE. At T182 the chain carries Phosphothreonine; by MAPK8. At T191 the chain carries Phosphothreonine.

This sequence belongs to the MARCKS family. In terms of assembly, binds to filamentous actin (F-actin), but not to monomeric G-actin, independently of its phosphorylation status. Interacts with calmodulin. Phosphorylated. Phosphorylation at Ser-120 and Thr-182 is non-redundantly catalyzed by MAPK8 in vivo. Phosphorylation at Thr-148 is preferentially catalyzed by MAPK8 in vivo, but this modification can also be catalyzed by other kinases in the absence of MAPK8. May be phosphorylated by protein kinase C, which disrupts the interaction with calmodulin.

Its subcellular location is the cytoplasm. The protein localises to the cytoskeleton. It is found in the cell membrane. Functionally, controls cell movement by regulating actin cytoskeleton homeostasis and filopodium and lamellipodium formation. When unphosphorylated, induces cell migration. When phosphorylated by MAPK8, induces actin bundles formation and stabilization, thereby reducing actin plasticity, hence restricting cell movement, including neuronal migration. May be involved in coupling the protein kinase C and calmodulin signal transduction systems. This chain is MARCKS-related protein (MARCKSL1), found in Oryctolagus cuniculus (Rabbit).